Here is a 567-residue protein sequence, read N- to C-terminus: Urease subunit alpha (567 aa).

Residues 129–567 (GGVDTHIHFI…LPMAQRYFLF (439 aa)) enclose the Urease domain. Positions 134, 136, and 217 each coordinate Ni(2+). An N6-carboxylysine modification is found at K217. H219 contacts substrate. H246 and H272 together coordinate Ni(2+). Catalysis depends on H320, which acts as the Proton donor. D360 contacts Ni(2+).

This sequence belongs to the metallo-dependent hydrolases superfamily. Urease alpha subunit family. Heterotrimer of UreA (gamma), UreB (beta) and UreC (alpha) subunits. Three heterotrimers associate to form the active enzyme. Ni cation serves as cofactor. Post-translationally, carboxylation allows a single lysine to coordinate two nickel ions.

It is found in the cytoplasm. The catalysed reaction is urea + 2 H2O + H(+) = hydrogencarbonate + 2 NH4(+). It functions in the pathway nitrogen metabolism; urea degradation; CO(2) and NH(3) from urea (urease route): step 1/1. The polypeptide is Urease subunit alpha (Aliivibrio fischeri (strain MJ11) (Vibrio fischeri)).